A 107-amino-acid chain; its full sequence is Phosphoribosyl-ATP pyrophosphatase (107 aa).

The protein belongs to the PRA-PH family.

It localises to the cytoplasm. The enzyme catalyses 1-(5-phospho-beta-D-ribosyl)-ATP + H2O = 1-(5-phospho-beta-D-ribosyl)-5'-AMP + diphosphate + H(+). Its pathway is amino-acid biosynthesis; L-histidine biosynthesis; L-histidine from 5-phospho-alpha-D-ribose 1-diphosphate: step 2/9. The polypeptide is Phosphoribosyl-ATP pyrophosphatase (hisE) (Agrobacterium fabrum (strain C58 / ATCC 33970) (Agrobacterium tumefaciens (strain C58))).